Reading from the N-terminus, the 314-residue chain is Dual specificity protein phosphatase 2 (314 aa).

The Rhodanese domain maps to 23 to 144 (EAERTLLLDC…FQGCCPDLCS (122 aa)). The Tyrosine-protein phosphatase domain occupies 172 to 313 (GPVEILPYLF…LLQFETQVLC (142 aa)). Cys257 functions as the Phosphocysteine intermediate in the catalytic mechanism.

This sequence belongs to the protein-tyrosine phosphatase family. Non-receptor class dual specificity subfamily. As to quaternary structure, interacts with MAPK14; this interaction does not lead to catalytic activation of DUSP2 and dephosphrylation of MAPK14. Expressed in hematopoietic tissues.

It localises to the nucleus. It carries out the reaction O-phospho-L-tyrosyl-[protein] + H2O = L-tyrosyl-[protein] + phosphate. The catalysed reaction is O-phospho-L-threonyl-[protein] + H2O = L-threonyl-[protein] + phosphate. Dephosphorylates both phosphorylated Thr and Tyr residues in MAPK1, and dephosphorylation of phosphotyrosine is slightly faster than that of phosphothreonine. Can dephosphorylate MAPK1. This chain is Dual specificity protein phosphatase 2, found in Homo sapiens (Human).